The chain runs to 315 residues: Homoserine kinase (315 aa).

97–107 (PPARGLGSSAT) serves as a coordination point for ATP.

This sequence belongs to the GHMP kinase family. Homoserine kinase subfamily.

It localises to the cytoplasm. It catalyses the reaction L-homoserine + ATP = O-phospho-L-homoserine + ADP + H(+). It participates in amino-acid biosynthesis; L-threonine biosynthesis; L-threonine from L-aspartate: step 4/5. Catalyzes the ATP-dependent phosphorylation of L-homoserine to L-homoserine phosphate. The polypeptide is Homoserine kinase (Prochlorococcus marinus (strain MIT 9301)).